Here is a 143-residue protein sequence, read N- to C-terminus: Spliceosomal protein DIB1 (143 aa).

At alanine 2 the chain carries N-acetylalanine.

This sequence belongs to the DIM1 family. Component of the U4/U6-U5 tri-snRNP complex composed of the U4, U6 and U5 snRNAs and at least PRP3, PRP4, PRP6, PRP8, PRP18, PRP31, PRP38, SNU13, SNU23, SNU66, SNU114, SPP381, SMB1, SMD1, SMD2, SMD3, SMX2, SMX3, LSM2, LSM3, LSM4, LSM5, LSM6, LSM7, LSM8, BRR2 and DIB1.

It localises to the nucleus. Functionally, essential role in pre-mRNA splicing. Also essential for entry into mitosis (G2/M progression) as well as for chromosome segregation during mitosis. The sequence is that of Spliceosomal protein DIB1 (DIB1) from Saccharomyces cerevisiae (strain ATCC 204508 / S288c) (Baker's yeast).